Here is a 134-residue protein sequence, read N- to C-terminus: MAMTDPLGDMLTRIRNGQQAKKDSVLTPASTLRVRVLDVLQREGYIRGYSEEALGAKGQHKGIRIELKYFEGQPAIRHVARVSKPGRRVYSGSKELPIVRNGLGITIVSTPRGVLSDAEAREQNVGGEVLAEVF.

The protein belongs to the universal ribosomal protein uS8 family. As to quaternary structure, part of the 30S ribosomal subunit. Contacts proteins S5 and S12.

In terms of biological role, one of the primary rRNA binding proteins, it binds directly to 16S rRNA central domain where it helps coordinate assembly of the platform of the 30S subunit. The protein is Small ribosomal subunit protein uS8 of Sphingopyxis alaskensis (strain DSM 13593 / LMG 18877 / RB2256) (Sphingomonas alaskensis).